Consider the following 318-residue polypeptide: Olfactory receptor 13C2 (318 aa).

Over 1 to 25 (MEWENHTILVEFFLKGLSGHPRLEL) the chain is Extracellular. N-linked (GlcNAc...) asparagine glycosylation occurs at Asn5. The chain crosses the membrane as a helical span at residues 26–46 (LFFVLIFIMYVVILLGNGTLI). Residues 47 to 54 (LISILDPH) lie on the Cytoplasmic side of the membrane. The helical transmembrane segment at 55–75 (LHTPMYFFLGNLSFLDICYTT) threads the bilayer. Topologically, residues 76 to 99 (TSIPSTLVSFLSERKTISLSGCAV) are extracellular. Cys97 and Cys189 form a disulfide bridge. The helical transmembrane segment at 100-120 (QMFLGLAMGTTECVLLGMMAF) threads the bilayer. Residues 121-139 (DRYVAICNPLRYPIIMSKD) lie on the Cytoplasmic side of the membrane. The helical transmembrane segment at 140-160 (AYVPMAAGSWIIGAVNSAVQS) threads the bilayer. Residues 161 to 197 (VFVVQLPFCRNNIINHFTCEILAVMKLACADISDNEF) lie on the Extracellular side of the membrane. Residues 198-217 (IMLVATTLFILTPLLLIIVS) traverse the membrane as a helical segment. Over 218-237 (YTLIIVSIFKISSSEGRSKA) the chain is Cytoplasmic. The helical transmembrane segment at 238-258 (SSTCSAHLTVVIIFYGTILFM) threads the bilayer. At 259-277 (YMKPKSKETLNSDDLDATD) the chain is on the extracellular side. The chain crosses the membrane as a helical span at residues 278 to 298 (KIISMFYGVMTPMMNPLIYSL). Topologically, residues 299–318 (RNKDVKEAVKHLLNRRFFSK) are cytoplasmic.

The protein belongs to the G-protein coupled receptor 1 family.

Its subcellular location is the cell membrane. Functionally, odorant receptor. The chain is Olfactory receptor 13C2 (OR13C2) from Homo sapiens (Human).